Consider the following 207-residue polypeptide: NADH-quinone oxidoreductase subunit A (207 aa).

The next 3 helical transmembrane spans lie at 6-26 (WSAI…LVVP), 62-82 (LVAI…AYAV), and 87-107 (AGWL…IGLV).

This sequence belongs to the complex I subunit 3 family. In terms of assembly, NDH-1 is composed of 14 different subunits. Subunits NuoA, H, J, K, L, M, N constitute the membrane sector of the complex.

The protein localises to the cell inner membrane. The catalysed reaction is a quinone + NADH + 5 H(+)(in) = a quinol + NAD(+) + 4 H(+)(out). In terms of biological role, NDH-1 shuttles electrons from NADH, via FMN and iron-sulfur (Fe-S) centers, to quinones in the respiratory chain. The immediate electron acceptor for the enzyme in this species is believed to be ubiquinone. Couples the redox reaction to proton translocation (for every two electrons transferred, four hydrogen ions are translocated across the cytoplasmic membrane), and thus conserves the redox energy in a proton gradient. The polypeptide is NADH-quinone oxidoreductase subunit A (Psychrobacter arcticus (strain DSM 17307 / VKM B-2377 / 273-4)).